The following is a 535-amino-acid chain: Probable galacturonosyltransferase 12 (535 aa).

The Cytoplasmic segment spans residues 1-37; that stretch reads MQLHISPSLRHVTVVTGKGLREFIKVKVGSRRFSYQM. The helical; Signal-anchor for type II membrane protein transmembrane segment at 38–58 threads the bilayer; sequence VFYSLLFFTFLLRFVFVLSTV. Residues 59 to 535 are Lumenal-facing; that stretch reads DTIDGDPSPC…FIKSCHIRAS (477 aa). Residues Asn397 and Asn430 are each glycosylated (N-linked (GlcNAc...) asparagine).

This sequence belongs to the glycosyltransferase 8 family. In terms of tissue distribution, highly expressed in stems. Detected in roots, inflorescences, siliques, and leaves. Expressed in cells undergoing secondary wall thickening, including interfascicular fibers and primary and secondary xylem.

The protein resides in the golgi apparatus membrane. It participates in glycan metabolism; pectin biosynthesis. Its function is as follows. Involved in pectin assembly and/or distribution, and in the synthesis of secondary wall glucuronoxylan. Probably involved in the synthesis of the glycosyl sequence at the glucuronoxylan reducing end. May be involved in synthesis of a complex glycan primer for xylan synthesis. This chain is Probable galacturonosyltransferase 12 (GAUT12), found in Arabidopsis thaliana (Mouse-ear cress).